The following is a 396-amino-acid chain: MSKEKFERTKPHVNVGTIGHVDHGKTTLTAAITKIMSKAHGGEFKDYSDIDNAPEERERGITISTAHVEYESEARHYAHVDCPGHADYVKNMITGAAQMDGAIIVIAATDGPMAQTREHILLSKQVGVPYIIVYMNKADMVDDEELVELVELEIRELLDEYDFPGDDTPVIFGSALKALEDDTSDIGVPSIIKLVEALDTYIPTPKRDTDKLFLMPIEDVFSISGRGTVVTGRIEAGIVNVGDELEIVGIKDTQTTTCTGVEMFRKLLDSGEAGDNVGVLLRGTKREEVERGQVLAKPGSIKPHSKFEAEVYILSKDEGGRHTPFFNNYRPQFYFRTTDVTGACQLPDGVEMVMPGDNVKMQVELLSPIAMEDGLRFAIREGGRTVGAGVVSKVAD.

In terms of domain architecture, tr-type G spans 10–206 (KPHVNVGTIG…ALDTYIPTPK (197 aa)). Residues 19-26 (GHVDHGKT) form a G1 region. 19–26 (GHVDHGKT) serves as a coordination point for GTP. Thr-26 is a binding site for Mg(2+). The interval 60-64 (GITIS) is G2. Positions 81 to 84 (DCPG) are G3. Residues 81-85 (DCPGH) and 136-139 (NKAD) contribute to the GTP site. A G4 region spans residues 136–139 (NKAD). Positions 174-176 (SAL) are G5.

Belongs to the TRAFAC class translation factor GTPase superfamily. Classic translation factor GTPase family. EF-Tu/EF-1A subfamily. As to quaternary structure, monomer.

The protein localises to the cytoplasm. It carries out the reaction GTP + H2O = GDP + phosphate + H(+). In terms of biological role, GTP hydrolase that promotes the GTP-dependent binding of aminoacyl-tRNA to the A-site of ribosomes during protein biosynthesis. This is Elongation factor Tu 2 from Ruthia magnifica subsp. Calyptogena magnifica.